The chain runs to 361 residues: MAVEGKQVAPKKAIIVELLKKLELGLVPDDEIKKLIRIQLGRRLQWGCKSTYEEQIAQLVNLTHSLRQMKIATEVETLDDQMYEVPIDFLKIMNGSNLKGSCCYFKNDSTTLDEAEIAMLELYCERAQIKDGHSVLDLGCGQGALTLYVAQKYKNSRVTAVTNSVSQKEFIEEESRKRNLSNVEVLLADITTHKMPDTYDRILVVELFEHMKNYELLLRKIKEWMAKDGLLFVEHICHKTFAYHYEPIDEDDWFTEYVFPAGTMIIPSASFFLYFQDDVSVVNHWTLSGKHFSRTNEEWLKRLDANVELIKPMFVTITGQCRQEAMKLINYWRGFCLSGMEMFGYNNGEEWMASHVLFKKK.

Positions 101, 139, 163, 167, 189, 190, and 205 each coordinate S-adenosyl-L-methionine. Residue C336 is part of the active site.

It belongs to the CFA/CMAS family. As to quaternary structure, homodimer. As to expression, highly expressed in rhizomes. Detected in roots, petioles, flower buds and leaves. Expressed between the developing stele and ground tissues near the root apical meristem, in the immature endodermis, the pericycle and the spokes of developing xylem in the apical region of the root and in the protoderm of leaf primordia in rhizomes.

It is found in the cytoplasm. The catalysed reaction is norreticuline + S-adenosyl-L-methionine = reticuline + S-adenosyl-L-homocysteine + H(+). It carries out the reaction (S)-coclaurine + S-adenosyl-L-methionine = (S)-N-methylcoclaurine + S-adenosyl-L-homocysteine + H(+). The enzyme catalyses heliamine + S-adenosyl-L-methionine = N-methylheliamine + S-adenosyl-L-homocysteine + H(+). The protein operates within alkaloid biosynthesis. In terms of biological role, involved in the biosynthesis of protoberberine alkaloids. N-methyltransferase with a substrate preference for (R,S)-norreticuline but also active with dimethoxytetrahydroisoquinoline. In Thalictrum flavum subsp. glaucum (Yellow meadow rue), this protein is (S)-coclaurine N-methyltransferase.